The primary structure comprises 278 residues: Formamidopyrimidine-DNA glycosylase (278 aa).

The Schiff-base intermediate with DNA role is filled by P2. E3 serves as the catalytic Proton donor. Residue K60 is the Proton donor; for beta-elimination activity of the active site. Residues H95 and R114 each coordinate DNA. The FPG-type zinc finger occupies 244–278; it reads WVYRRGGEPCRRCGTIIRRDKLSGRSTHWCPTCQG. The Proton donor; for delta-elimination activity role is filled by R268.

It belongs to the FPG family. Monomer. Zn(2+) serves as cofactor.

The enzyme catalyses Hydrolysis of DNA containing ring-opened 7-methylguanine residues, releasing 2,6-diamino-4-hydroxy-5-(N-methyl)formamidopyrimidine.. It carries out the reaction 2'-deoxyribonucleotide-(2'-deoxyribose 5'-phosphate)-2'-deoxyribonucleotide-DNA = a 3'-end 2'-deoxyribonucleotide-(2,3-dehydro-2,3-deoxyribose 5'-phosphate)-DNA + a 5'-end 5'-phospho-2'-deoxyribonucleoside-DNA + H(+). In terms of biological role, involved in base excision repair of DNA damaged by oxidation or by mutagenic agents. Acts as a DNA glycosylase that recognizes and removes damaged bases. Has a preference for oxidized purines, such as 7,8-dihydro-8-oxoguanine (8-oxoG). Has AP (apurinic/apyrimidinic) lyase activity and introduces nicks in the DNA strand. Cleaves the DNA backbone by beta-delta elimination to generate a single-strand break at the site of the removed base with both 3'- and 5'-phosphates. This is Formamidopyrimidine-DNA glycosylase from Parasynechococcus marenigrum (strain WH8102).